The sequence spans 392 residues: Phosphoglycerate kinase (392 aa).

Substrate is bound by residues Asp21–Asn23, Arg36, His59–Arg62, Arg113, and Arg146. Residues Lys197, Glu314, and Gly340–Thr343 each bind ATP.

Belongs to the phosphoglycerate kinase family. Monomer.

The protein localises to the cytoplasm. It catalyses the reaction (2R)-3-phosphoglycerate + ATP = (2R)-3-phospho-glyceroyl phosphate + ADP. The protein operates within carbohydrate degradation; glycolysis; pyruvate from D-glyceraldehyde 3-phosphate: step 2/5. This Vesicomyosocius okutanii subsp. Calyptogena okutanii (strain HA) protein is Phosphoglycerate kinase.